The sequence spans 291 residues: MAITAAQVKELRDKTSVGMMDAKKALVEADGDLDKAIDLLREKGMAKAAKKGDRVAAEGMTAVAVKGNRAAIIELNSETDFVAGNAEFNELLNAVANTIVEFAPADVEAALALEVQEGQTLNDKIIGTTQITGEKITLRRFSVVEKSDSENFGSYSHLAGSISALVVVDGASEEAAKDIAMHVAAIAPQFVSDDQVPADVIAKEKEVQLASEDLNGKPDNIKERMVEGRIKKFLAEISLLDQPFVKNGDQTVAQFISSQNGSVKSFVRYQVGDGIEKQVTDLAEEVAKQLG.

The interval 79–82 (TDFV) is involved in Mg(2+) ion dislocation from EF-Tu.

The protein belongs to the EF-Ts family.

The protein localises to the cytoplasm. Its function is as follows. Associates with the EF-Tu.GDP complex and induces the exchange of GDP to GTP. It remains bound to the aminoacyl-tRNA.EF-Tu.GTP complex up to the GTP hydrolysis stage on the ribosome. The protein is Elongation factor Ts of Leuconostoc mesenteroides subsp. mesenteroides (strain ATCC 8293 / DSM 20343 / BCRC 11652 / CCM 1803 / JCM 6124 / NCDO 523 / NBRC 100496 / NCIMB 8023 / NCTC 12954 / NRRL B-1118 / 37Y).